A 418-amino-acid polypeptide reads, in one-letter code: MPQTIAEKIISNHSGRRVKAGEFVIADVDLTAVQDGTGPLTVEELKKAGFTKLANPARTILFIDHAAPSPRKELSNSQVVLRNFAKETGAILSEIGEGVCHQLLAEKYVNPGEILIGADSHTCTGGALGAFATGMGSTDVAVGMALGKTWLKAPQTFKIEVEGAFKKGVGAKDLILHLIGVIGADGATYKALEFHGSTIRNMEMADRFTLANMAVEAGAKAGLFFTDEKTRAYLAERGRGDNFKLISADEGADYEKVIKIDASSLEPTVSCPHTVDNTKTVGELKDIKVNQVFIGTCTNGRIEDLRIAAEILKDKKVNPGTRTFITPASRDVMLAALKEGLIEIFVKAGASVQTPGCGPCVGVHGGILGDGEVCLATQNRNFQGRMGNTKGFIYLSSPAVAAYSALKGYISDPREILK.

The [4Fe-4S] cluster site is built by C297, C357, and C360.

The protein belongs to the aconitase/IPM isomerase family. LeuC type 2 subfamily. Heterodimer of LeuC and LeuD. It depends on [4Fe-4S] cluster as a cofactor.

The enzyme catalyses (2R,3S)-3-isopropylmalate = (2S)-2-isopropylmalate. The protein operates within amino-acid biosynthesis; L-leucine biosynthesis; L-leucine from 3-methyl-2-oxobutanoate: step 2/4. Functionally, catalyzes the isomerization between 2-isopropylmalate and 3-isopropylmalate, via the formation of 2-isopropylmaleate. This chain is 3-isopropylmalate dehydratase large subunit, found in Elusimicrobium minutum (strain Pei191).